A 97-amino-acid polypeptide reads, in one-letter code: UPF0235 protein PFL_5841 (97 aa).

It belongs to the UPF0235 family.

This is UPF0235 protein PFL_5841 from Pseudomonas fluorescens (strain ATCC BAA-477 / NRRL B-23932 / Pf-5).